Consider the following 333-residue polypeptide: Gap junction alpha-4 protein (333 aa).

The Cytoplasmic portion of the chain corresponds to 1-20 (MGDWGFLEKLLDQVQEHSTV). The helical transmembrane segment at 21–40 (VGKIWLTVLFIFRILILGLA) threads the bilayer. The Extracellular portion of the chain corresponds to 41-76 (GESVWGDEQSDFECNTAQPGCTNVCYDQAFPISHIR). A helical membrane pass occupies residues 77-99 (YWVLQFLFVSTPTLIYLGHVIYL). Residues 100-148 (SRREERLRQKEGELRALPSKDPHVERALAAIEHQMAKISVAEDGRLRIR) are Cytoplasmic-facing. The helical transmembrane segment at 149 to 171 (GALMGTYVISVLCKSVLEAGFLY) threads the bilayer. Topologically, residues 172–208 (GQWRLYGWTMEPVFVCQRAPCPHVVDCYVSRPTEKTI) are extracellular. A helical membrane pass occupies residues 209–231 (FIIFMLVVGVISLVLNLLELVHL). At 232–333 (LCRCVSREIK…NSSASKKQYV (102 aa)) the chain is on the cytoplasmic side. Positions 292–333 (ANLTTEERLTSTRPPPFVNAAPQGGQKSSSRPNSSASKKQYV) are disordered. Low complexity predominate over residues 318–333 (KSSSRPNSSASKKQYV).

Belongs to the connexin family. Alpha-type (group II) subfamily. A connexon is composed of a hexamer of connexins. As to expression, highly expressed in lung.

Its subcellular location is the cell membrane. The protein localises to the cell junction. It is found in the gap junction. Its function is as follows. One gap junction consists of a cluster of closely packed pairs of transmembrane channels, the connexons, through which materials of low MW diffuse from one cell to a neighboring cell. This chain is Gap junction alpha-4 protein (Gja4), found in Rattus norvegicus (Rat).